The chain runs to 468 residues: UDP-N-acetylmuramate--L-alanine ligase (468 aa).

ATP is bound at residue 121–127 (GSHGKTT).

Belongs to the MurCDEF family.

Its subcellular location is the cytoplasm. The catalysed reaction is UDP-N-acetyl-alpha-D-muramate + L-alanine + ATP = UDP-N-acetyl-alpha-D-muramoyl-L-alanine + ADP + phosphate + H(+). It functions in the pathway cell wall biogenesis; peptidoglycan biosynthesis. Functionally, cell wall formation. This Borrelia garinii subsp. bavariensis (strain ATCC BAA-2496 / DSM 23469 / PBi) (Borreliella bavariensis) protein is UDP-N-acetylmuramate--L-alanine ligase.